Reading from the N-terminus, the 402-residue chain is E3 ubiquitin-protein ligase makorin-2 (402 aa).

3 C3H1-type zinc fingers span residues 2–29 (TTKQVTCRYFLHGVCREGNHCQFSHDPS), 31–58 (SKPSTICKFYQRGTCAYGERCRYDHVKL), and 141–168 (QDLPRLCPYAAVGHCYYEENCIYLHGDK). Residues 169 to 198 (CEVCGLQVLDPHNPEQRSMHEKMCLLAFEA) are makorin-type Cys-His. The segment at 214-268 (CSICMEVVVQKMNPSDRRFGILSSCCHVFCLACIRKWRCTRNFSNKIIKSCPECR) adopts an RING-type zinc-finger fold. Residues 297 to 326 (GVGKKPCKYFDQGRGSCPFGGKCLYLHALP) form a C3H1-type 4 zinc finger.

Its subcellular location is the cytoplasm. The protein resides in the nucleus. The catalysed reaction is S-ubiquitinyl-[E2 ubiquitin-conjugating enzyme]-L-cysteine + [acceptor protein]-L-lysine = [E2 ubiquitin-conjugating enzyme]-L-cysteine + N(6)-ubiquitinyl-[acceptor protein]-L-lysine.. It participates in protein modification; protein ubiquitination. Its function is as follows. E3 ubiquitin ligase catalyzing the covalent attachment of ubiquitin moieties onto substrate proteins. Inhibits neurogenesis and axis formation during embryonic development by modulating the phosphatidylinositol 3-kinase (PI3K) pathway. Acts downstream of PI3K and akt1 to up-regulate gsk3b mRNA expression. In Takifugu rubripes (Japanese pufferfish), this protein is E3 ubiquitin-protein ligase makorin-2.